We begin with the raw amino-acid sequence, 591 residues long: DDB1- and CUL4-associated factor 8 (591 aa).

Polar residues predominate over residues 1-25 (MSNKRPNTTDGRTDLANGSLSSSPE). A disordered region spans residues 1–140 (MSNKRPNTTD…EDWVSSETTA (140 aa)). Phosphoserine is present on residues Ser-22 and Ser-23. The short motif at 40-51 (IEVEASDLSLSL) is the Nuclear export signal element. 2 stretches are compositionally biased toward basic and acidic residues: residues 66 to 100 (RGTD…HGHS) and 118 to 131 (SRDQ…RALE). Residues Ser-100, Ser-123, and Ser-124 each carry the phosphoserine modification. WD repeat units lie at residues 185–224 (GHTG…PVLD), 228–269 (GHKS…CCKN), 275–315 (QHKG…PASK), 323–363 (EKKV…ENEN), 379–418 (ESKA…GAQY), 426–466 (RNNA…IIQF), and 470–509 (DKGG…STEL). Position 198 is an omega-N-methylarginine; by PRMT1 (Arg-198). The interval 552-591 (HRRWREPGVGATDADSDESPSSSDTSDEEEGPDRVQCMPS) is disordered.

It belongs to the WD repeat DCAF8 family. As to quaternary structure, interacts with DDB1, CUL4A and CUL4B. Interacts with KPNA1, KPNB1 and XPO1. Expressed in the brain.

Its subcellular location is the nucleus. The protein resides in the cytoplasm. The protein operates within protein modification; protein ubiquitination. In terms of biological role, may function as a substrate receptor for CUL4-DDB1 E3 ubiquitin-protein ligase complex. The sequence is that of DDB1- and CUL4-associated factor 8 (Dcaf8) from Mus musculus (Mouse).